The chain runs to 161 residues: Cystatin cpi-2 (161 aa).

An N-terminal signal peptide occupies residues Met1–Ala25. The short motif at Ser76–Asp78 is the Important for interaction with host LGMN element. Asn89 is a glycosylation site (N-linked (GlcNAc...) asparagine). The short motif at Gln93 to Gly97 is the Secondary area of contact element. Cys111 and Cys124 are disulfide-bonded.

It belongs to the cystatin family.

In terms of biological role, cysteine protease inhibitor which inhibits members of the peptidase C1 family. Also acts as an asparaginyl endopeptidase inhibitor. In the human host, inhibits CTSL/cathepsin L, CTSS/cathepsin S, CTSB/cathepsin B and asparaginyl endopeptidase LGMN/AEP which may cause defects in both antigen and MHC class II invariant chain CD74/Ii processing. This Brugia malayi (Filarial nematode worm) protein is Cystatin cpi-2.